Consider the following 458-residue polypeptide: Phosphoglucosamine mutase (458 aa).

S106 serves as the catalytic Phosphoserine intermediate. Mg(2+)-binding residues include S106, D247, D249, and D251. S106 carries the phosphoserine modification.

Belongs to the phosphohexose mutase family. Requires Mg(2+) as cofactor. Post-translationally, activated by phosphorylation.

It catalyses the reaction alpha-D-glucosamine 1-phosphate = D-glucosamine 6-phosphate. In terms of biological role, catalyzes the conversion of glucosamine-6-phosphate to glucosamine-1-phosphate. The polypeptide is Phosphoglucosamine mutase (Chlamydia trachomatis serovar A (strain ATCC VR-571B / DSM 19440 / HAR-13)).